The chain runs to 301 residues: Structure-specific endonuclease subunit SLX1 (301 aa).

Residues 12–95 (AFYCCYLLRS…QHPYQTRFIK (84 aa)) enclose the GIY-YIG domain. The segment at 216 to 283 (CAICEKIVDY…IPTSGQCPNC (68 aa)) adopts an SLX1-type zinc-finger fold.

Belongs to the SLX1 family. In terms of assembly, forms a heterodimer with SLX4. Requires a divalent metal cation as cofactor.

The protein localises to the nucleus. Its function is as follows. Catalytic subunit of the SLX1-SLX4 structure-specific endonuclease that resolves DNA secondary structures generated during DNA repair and recombination. Has endonuclease activity towards branched DNA substrates, introducing single-strand cuts in duplex DNA close to junctions with ss-DNA. This is Structure-specific endonuclease subunit SLX1 from Eremothecium gossypii (strain ATCC 10895 / CBS 109.51 / FGSC 9923 / NRRL Y-1056) (Yeast).